Reading from the N-terminus, the 939-residue chain is Protein translocase subunit SecA (939 aa).

ATP contacts are provided by residues Q85, 103–107, and D504; that span reads GEGKT. Positions 850–939 are disordered; that stretch reads PVQDGAERPS…KGGGGRRRKK (90 aa). The span at 854-864 shows a compositional bias: basic and acidic residues; it reads GAERPSLEKEG. Over residues 924-939 the composition is skewed to basic residues; that stretch reads ERRKAQKGGGGRRRKK.

This sequence belongs to the SecA family. In terms of assembly, monomer and homodimer. Part of the essential Sec protein translocation apparatus which comprises SecA, SecYEG and auxiliary proteins SecDF. Other proteins may also be involved.

It is found in the cell membrane. The protein resides in the cytoplasm. It carries out the reaction ATP + H2O + cellular proteinSide 1 = ADP + phosphate + cellular proteinSide 2.. Its function is as follows. Part of the Sec protein translocase complex. Interacts with the SecYEG preprotein conducting channel. Has a central role in coupling the hydrolysis of ATP to the transfer of proteins into and across the cell membrane, serving as an ATP-driven molecular motor driving the stepwise translocation of polypeptide chains across the membrane. This Streptomyces griseus subsp. griseus (strain JCM 4626 / CBS 651.72 / NBRC 13350 / KCC S-0626 / ISP 5235) protein is Protein translocase subunit SecA.